Reading from the N-terminus, the 58-residue chain is Small integral membrane protein 11 (58 aa).

A helical membrane pass occupies residues 10-32 (PLLLYILAAKTLILCLTFAGVKM). The stretch at 29–58 (GVKMYQRKRLEAKQQKLEAERKKQSEKKDN) forms a coiled coil.

Expressed in heart, spleen, liver, stomach, muscle, lung, testis, skin, PBL and bone marrow.

The protein localises to the membrane. The sequence is that of Small integral membrane protein 11 from Homo sapiens (Human).